A 20-amino-acid chain; its full sequence is Short cationic peptide-6a (20 aa).

Ser20 is modified (serine amide).

In terms of tissue distribution, expressed by the venom gland.

Its subcellular location is the secreted. In Cupiennius salei (American wandering spider), this protein is Short cationic peptide-6a.